A 101-amino-acid polypeptide reads, in one-letter code: Integration host factor subunit alpha (101 aa).

The protein belongs to the bacterial histone-like protein family. Heterodimer of an alpha and a beta chain.

Its function is as follows. This protein is one of the two subunits of integration host factor, a specific DNA-binding protein that functions in genetic recombination as well as in transcriptional and translational control. In Dinoroseobacter shibae (strain DSM 16493 / NCIMB 14021 / DFL 12), this protein is Integration host factor subunit alpha.